Reading from the N-terminus, the 463-residue chain is Argininosuccinate lyase (463 aa).

Belongs to the lyase 1 family. Argininosuccinate lyase subfamily.

It localises to the cytoplasm. The enzyme catalyses 2-(N(omega)-L-arginino)succinate = fumarate + L-arginine. It functions in the pathway amino-acid biosynthesis; L-arginine biosynthesis; L-arginine from L-ornithine and carbamoyl phosphate: step 3/3. The chain is Argininosuccinate lyase from Streptococcus pneumoniae (strain JJA).